The sequence spans 770 residues: uncharacterized protein (770 aa).

Residues 1-24 (MVSAAWLRYPSLLTLGILVSRVAA) form the signal peptide. Residues Asn-78, Asn-204, Asn-533, and Asn-638 are each glycosylated (N-linked (GlcNAc...) asparagine). The disordered stretch occupies residues 746–770 (SWGTGQNDVPPSLGAGIKRDGLRFT).

It belongs to the glycosyl hydrolase 92 family.

It is found in the secreted. This is an uncharacterized protein from Arthroderma benhamiae (strain ATCC MYA-4681 / CBS 112371) (Trichophyton mentagrophytes).